A 139-amino-acid chain; its full sequence is UPF0225 protein Bpro_4182 (139 aa).

It belongs to the UPF0225 family.

The sequence is that of UPF0225 protein Bpro_4182 from Polaromonas sp. (strain JS666 / ATCC BAA-500).